We begin with the raw amino-acid sequence, 421 residues long: uncharacterized protein (421 aa).

The TRAM domain occupies 14-72 (DLTKGDTITVEVTRPAHGGEGIAHHGGRVIFVRGGFPGDDVDVEITQVKKRFARGFVVQ). S-adenosyl-L-methionine-binding residues include Gln250, Tyr286, Glu308, and Asp349. The active-site Nucleophile is Cys376.

It belongs to the class I-like SAM-binding methyltransferase superfamily. RNA M5U methyltransferase family.

This is an uncharacterized protein from Corynebacterium efficiens (strain DSM 44549 / YS-314 / AJ 12310 / JCM 11189 / NBRC 100395).